Consider the following 166-residue polypeptide: 2-C-methyl-D-erythritol 2,4-cyclodiphosphate synthase (166 aa).

2 residues coordinate a divalent metal cation: Asp-11 and His-13. Residues Asp-11–His-13 and His-40–Ser-41 each bind 4-CDP-2-C-methyl-D-erythritol 2-phosphate. Residue His-48 coordinates a divalent metal cation. Residues Asp-62–Gly-64, Thr-135–Asp-138, Phe-142, and Arg-145 contribute to the 4-CDP-2-C-methyl-D-erythritol 2-phosphate site.

This sequence belongs to the IspF family. In terms of assembly, homotrimer. A divalent metal cation serves as cofactor.

The catalysed reaction is 4-CDP-2-C-methyl-D-erythritol 2-phosphate = 2-C-methyl-D-erythritol 2,4-cyclic diphosphate + CMP. It participates in isoprenoid biosynthesis; isopentenyl diphosphate biosynthesis via DXP pathway; isopentenyl diphosphate from 1-deoxy-D-xylulose 5-phosphate: step 4/6. Involved in the biosynthesis of isopentenyl diphosphate (IPP) and dimethylallyl diphosphate (DMAPP), two major building blocks of isoprenoid compounds. Catalyzes the conversion of 4-diphosphocytidyl-2-C-methyl-D-erythritol 2-phosphate (CDP-ME2P) to 2-C-methyl-D-erythritol 2,4-cyclodiphosphate (ME-CPP) with a corresponding release of cytidine 5-monophosphate (CMP). This is 2-C-methyl-D-erythritol 2,4-cyclodiphosphate synthase from Pseudarthrobacter chlorophenolicus (strain ATCC 700700 / DSM 12829 / CIP 107037 / JCM 12360 / KCTC 9906 / NCIMB 13794 / A6) (Arthrobacter chlorophenolicus).